A 316-amino-acid polypeptide reads, in one-letter code: Pantothenate kinase (316 aa).

95–102 (GSVAVGKS) serves as a coordination point for ATP.

Belongs to the prokaryotic pantothenate kinase family.

The protein resides in the cytoplasm. The catalysed reaction is (R)-pantothenate + ATP = (R)-4'-phosphopantothenate + ADP + H(+). Its pathway is cofactor biosynthesis; coenzyme A biosynthesis; CoA from (R)-pantothenate: step 1/5. In Halalkalibacterium halodurans (strain ATCC BAA-125 / DSM 18197 / FERM 7344 / JCM 9153 / C-125) (Bacillus halodurans), this protein is Pantothenate kinase (coaA).